Here is a 282-residue protein sequence, read N- to C-terminus: ATP phosphoribosyltransferase (282 aa).

The protein belongs to the ATP phosphoribosyltransferase family. Long subfamily. It depends on Mg(2+) as a cofactor.

Its subcellular location is the cytoplasm. The catalysed reaction is 1-(5-phospho-beta-D-ribosyl)-ATP + diphosphate = 5-phospho-alpha-D-ribose 1-diphosphate + ATP. The protein operates within amino-acid biosynthesis; L-histidine biosynthesis; L-histidine from 5-phospho-alpha-D-ribose 1-diphosphate: step 1/9. Its activity is regulated as follows. Feedback inhibited by histidine. Catalyzes the condensation of ATP and 5-phosphoribose 1-diphosphate to form N'-(5'-phosphoribosyl)-ATP (PR-ATP). Has a crucial role in the pathway because the rate of histidine biosynthesis seems to be controlled primarily by regulation of HisG enzymatic activity. This is ATP phosphoribosyltransferase from Pyrobaculum neutrophilum (strain DSM 2338 / JCM 9278 / NBRC 100436 / V24Sta) (Thermoproteus neutrophilus).